A 572-amino-acid chain; its full sequence is Dityrosine transporter 1 (572 aa).

Disordered regions lie at residues Met-1–His-28 and Arg-49–Thr-95. The Cytoplasmic portion of the chain corresponds to Met-1–Leu-110. Polar residues predominate over residues Leu-13 to His-28. Basic and acidic residues predominate over residues Ala-50 to Asp-62. Over residues Ser-83–Thr-95 the composition is skewed to polar residues. The chain crosses the membrane as a helical span at residues Ile-111–Ile-131. Over Pro-132–Asn-149 the chain is Extracellular. The chain crosses the membrane as a helical span at residues Ala-150–Ala-170. Residues Asp-171–Ser-184 lie on the Cytoplasmic side of the membrane. A helical membrane pass occupies residues Leu-185 to Val-205. Residues Leu-206–Arg-207 lie on the Extracellular side of the membrane. The chain crosses the membrane as a helical span at residues Ile-208–Val-228. Residues Val-229–Tyr-240 are Cytoplasmic-facing. The helical transmembrane segment at Phe-241–Met-261 threads the bilayer. The Extracellular segment spans residues Lys-262–Arg-267. The chain crosses the membrane as a helical span at residues Trp-268–Leu-288. At Pro-289 to Pro-366 the chain is on the cytoplasmic side. Residues Pro-367 to Val-387 traverse the membrane as a helical segment. Topologically, residues Thr-388–Arg-398 are extracellular. Residues Phe-399 to Ser-419 form a helical membrane-spanning segment. The Cytoplasmic segment spans residues Gln-420–Phe-446. The chain crosses the membrane as a helical span at residues Arg-447 to Ile-469. At Phe-470–His-472 the chain is on the extracellular side. A helical membrane pass occupies residues Tyr-473–Ser-493. Over Asn-494 to Asn-520 the chain is Cytoplasmic. Residues Val-521–Trp-541 form a helical membrane-spanning segment. Residue Cys-542 is a topological domain, extracellular. The helical transmembrane segment at Phe-543–Phe-563 threads the bilayer. The tract at residues Leu-548–Phe-572 is required for the localization to the prospore membrane. Topologically, residues Gln-564 to Phe-572 are cytoplasmic.

This sequence belongs to the major facilitator superfamily. CAR1 family. Phosphorylated.

The protein resides in the prospore membrane. Its function is as follows. Prospore-specific dityrosine transporter responsible for translocation of dityrosine through the prospore membrane and required for the formation of the outermost layer of the spore. In Saccharomyces cerevisiae (strain ATCC 204508 / S288c) (Baker's yeast), this protein is Dityrosine transporter 1 (DTR1).